The following is a 362-amino-acid chain: Severin (362 aa).

Residues 53-102 (FKVVPVPESSYGKFYDGDSYIILHTFKEGNSLKHDIHFFLGTFTTQDEAG) form a Gelsolin-like 1 repeat. Position 162–170 (162–170 (RLLHISGDK)) interacts with a 1,2-diacyl-sn-glycero-3-phospho-(1D-myo-inositol-4,5-bisphosphate). Gelsolin-like repeat units lie at residues 172 to 212 (AKVA…QEKN) and 280 to 323 (LKFS…NEKK).

This sequence belongs to the villin/gelsolin family.

Severin blocks the ends of F-actin and causes the fragmentation and depolymerization of actin filaments in a Ca(2+) dependent manner. The polypeptide is Severin (sevA) (Dictyostelium discoideum (Social amoeba)).